A 283-amino-acid polypeptide reads, in one-letter code: Co-chaperone protein DjlA (283 aa).

Residues 1 to 6 (MQIFGK) are Periplasmic-facing. The helical transmembrane segment at 7–30 (ILGGFFGFLFGGFFGAALGIFIGH) threads the bilayer. Topologically, residues 31–283 (QFDKAKRMAN…DLIKKEKGIK (253 aa)) are cytoplasmic. Gly residues predominate over residues 188 to 197 (QGGGFSGHQS). A disordered region spans residues 188–210 (QGGGFSGHQSGGSHQQGQWQQAS). Positions 198–210 (GGSHQQGQWQQAS) are enriched in low complexity. The J domain maps to 217 to 283 (DAYNLLGISE…DLIKKEKGIK (67 aa)).

In terms of assembly, homodimer.

The protein localises to the cell inner membrane. Functionally, regulatory DnaK co-chaperone. Direct interaction between DnaK and DjlA is needed for the induction of the wcaABCDE operon, involved in the synthesis of a colanic acid polysaccharide capsule, possibly through activation of the RcsB/RcsC phosphotransfer signaling pathway. The colanic acid capsule may help the bacterium survive conditions outside the host. The protein is Co-chaperone protein DjlA of Aliivibrio fischeri (strain ATCC 700601 / ES114) (Vibrio fischeri).